The primary structure comprises 569 residues: Peroxynitrite isomerase THAP4 (569 aa).

Residues 1–85 (MVICCAAVNC…LKPTAVPSIF (85 aa)) form a THAP-type zinc finger. The disordered stretch occupies residues 83–219 (SIFHLSEKKR…GISMDDFTPP (137 aa)). Polar residues predominate over residues 121 to 130 (IGSSLSSSDN). Serine 159 carries the post-translational modification Phosphoserine. Low complexity predominate over residues 196–210 (ASSSAADAGGADKSG). The HCFC1-binding motif (HBM) motif lies at 230 to 233 (LHSY). Serine 234 carries the post-translational modification Phosphoserine. The segment at 235–312 (FSSKHTRERP…EAVQSEHSDA (78 aa)) is disordered. The span at 242–262 (ERPSVPREPMDRKRLKRDIEP) shows a compositional bias: basic and acidic residues. A compositionally biased stretch (polar residues) spans 265 to 279 (SGNSVAQSPPSSSLT). Residues 280-289 (ATPQKASQSP) are compositionally biased toward low complexity. The nitrobindin stretch occupies residues 407–569 (PPKLNPVVEP…LHITYKKVTP (163 aa)). Heme b is bound by residues threonine 436 and histidine 559.

In the C-terminal section; belongs to the nitrobindin family. Homodimer. Heme b serves as cofactor.

It is found in the cytoplasm. The protein localises to the nucleus. It carries out the reaction peroxynitrite = nitrate. Its pathway is nitrogen metabolism. Its function is as follows. Heme-binding protein able to scavenge peroxynitrite and to protect free L-tyrosine against peroxynitrite-mediated nitration, by acting as a peroxynitrite isomerase that converts peroxynitrite to nitrate. Therefore, this protein likely plays a role in peroxynitrite sensing and in the detoxification of reactive nitrogen and oxygen species (RNS and ROS, respectively). Is able to bind nitric oxide (NO) in vitro, but may act as a sensor of peroxynitrite levels in vivo, possibly modulating the transcriptional activity residing in the N-terminal region. The polypeptide is Peroxynitrite isomerase THAP4 (Rattus norvegicus (Rat)).